The following is an 892-amino-acid chain: DNA mismatch repair protein MutS (892 aa).

Residue 634-641 (GPNMGGKS) participates in ATP binding.

This sequence belongs to the DNA mismatch repair MutS family.

Functionally, this protein is involved in the repair of mismatches in DNA. It is possible that it carries out the mismatch recognition step. This protein has a weak ATPase activity. The protein is DNA mismatch repair protein MutS of Paraburkholderia phymatum (strain DSM 17167 / CIP 108236 / LMG 21445 / STM815) (Burkholderia phymatum).